Here is a 237-residue protein sequence, read N- to C-terminus: Phosphoribosylaminoimidazole-succinocarboxamide synthase (237 aa).

The protein belongs to the SAICAR synthetase family.

The enzyme catalyses 5-amino-1-(5-phospho-D-ribosyl)imidazole-4-carboxylate + L-aspartate + ATP = (2S)-2-[5-amino-1-(5-phospho-beta-D-ribosyl)imidazole-4-carboxamido]succinate + ADP + phosphate + 2 H(+). It participates in purine metabolism; IMP biosynthesis via de novo pathway; 5-amino-1-(5-phospho-D-ribosyl)imidazole-4-carboxamide from 5-amino-1-(5-phospho-D-ribosyl)imidazole-4-carboxylate: step 1/2. This is Phosphoribosylaminoimidazole-succinocarboxamide synthase from Listeria monocytogenes serovar 1/2a (strain ATCC BAA-679 / EGD-e).